A 586-amino-acid polypeptide reads, in one-letter code: MEQSVSAEQIELKSSLPGSKKVYVEGSREGMKVPMREIELSDTNGVPNSPIRVYDTSGPYTDPEYKVELEKGIPTPRRNWIIERGDVEEYEGREIKPEDDGVKAASNHTPVFPQMDRKPLRAKKGANVTQMHYARKGIITSEMEYVAIREGVEPEFVRKEIAEGRAILPANINHPEAEPMIIGRNFHVKVNANIGNSAVSSSIAEEVEKMTWATRWGADTIMDLSTGKNIHTTREWIIRNAPVPVGTVPIYQALEKVQGIAENLTWEVYRDTLIEQAEQGVDYFTIHAGVLLRYIPLTAKRMTGIVSRGGSIMAQWCLYHHKENFLYTHFEEICEIMKQYDVSFSLGDGLRPGSIADANDEAQFAELETLGELTKIAWKHDVQVMIEGPGHVPMHLIKENMEKEIDICQGAPFYTLGPLTTDIAPGYDHITSAIGAAMIGWFGTAMLCYVTPKEHLGLPNKDDVREGVITYKIAAHAADLAKGHKTAQQRDDALSKARFEFRWRDQFNLSLDPERAMEFHDETLPAEGAKTAHFCSMCGPKFCSMKISHDIREYAKENNLETTEAIEKGMKEKAKEFKEAGSHLYQ.

Disordered stretches follow at residues 38–59 and 92–114; these read IELS…TSGP and GREI…VFPQ. The segment covering 92-102 has biased composition (basic and acidic residues); that stretch reads GREIKPEDDGV. Substrate-binding positions include Asn193, Met222, Tyr251, His287, 307 to 309, 348 to 351, and Glu387; these read SRG and DGLR. Position 391 (His391) interacts with Zn(2+). Tyr414 contributes to the substrate binding site. His455 is a Zn(2+) binding site. The [4Fe-4S] cluster site is built by Cys535, Cys538, and Cys543.

Belongs to the ThiC family. [4Fe-4S] cluster serves as cofactor.

It catalyses the reaction 5-amino-1-(5-phospho-beta-D-ribosyl)imidazole + S-adenosyl-L-methionine = 4-amino-2-methyl-5-(phosphooxymethyl)pyrimidine + CO + 5'-deoxyadenosine + formate + L-methionine + 3 H(+). It participates in cofactor biosynthesis; thiamine diphosphate biosynthesis. Its function is as follows. Catalyzes the synthesis of the hydroxymethylpyrimidine phosphate (HMP-P) moiety of thiamine from aminoimidazole ribotide (AIR) in a radical S-adenosyl-L-methionine (SAM)-dependent reaction. This is Phosphomethylpyrimidine synthase from Bacillus cytotoxicus (strain DSM 22905 / CIP 110041 / 391-98 / NVH 391-98).